We begin with the raw amino-acid sequence, 307 residues long: tRNA dimethylallyltransferase (307 aa).

Position 10 to 17 (10 to 17 (GPTAVGKT)) interacts with ATP. 12–17 (TAVGKT) provides a ligand contact to substrate. An interaction with substrate tRNA region spans residues 35–38 (DSMQ).

The protein belongs to the IPP transferase family. As to quaternary structure, monomer. Mg(2+) is required as a cofactor.

It carries out the reaction adenosine(37) in tRNA + dimethylallyl diphosphate = N(6)-dimethylallyladenosine(37) in tRNA + diphosphate. In terms of biological role, catalyzes the transfer of a dimethylallyl group onto the adenine at position 37 in tRNAs that read codons beginning with uridine, leading to the formation of N6-(dimethylallyl)adenosine (i(6)A). The protein is tRNA dimethylallyltransferase of Ligilactobacillus salivarius (strain UCC118) (Lactobacillus salivarius).